We begin with the raw amino-acid sequence, 416 residues long: MLSAADFDPKPRRASVAVDVGGVIVGGGAPIVVQSMTNTDTADIDSTVAQVAALHRAGSELVRITVDRDESAAAVPKIRERLLRLGMDVPLIGDFHYIGHKLLADHPACAEALAKYRINPGNVGFKDKKDKQFAEIIEMAIRYDKPVRIGVNWGSLDQDLLTALMDENAAAGSPLSARQVTREAIVQSALLSAALAEEIGLPRNRIILSAKVSQVQDLIAVNSMLAERSNHALHLGLTEAGMGSKGIVASSAAMGFVLQHGIGDTIRVSLTPEPNGDRTREVQVAQEILQVMGFRQFVPVVAACPGCGRTTSTVFQELAQNIQNDIRKNMPVWREKYPGVEALNVAVMGCIVNGPGESKHADIGISLPGTGETPAAPVFIDGKKALTLRGPNIAADFEALVVDYIEKRFGRQTAAE.

Residues Cys-304, Cys-307, Cys-350, and Glu-357 each coordinate [4Fe-4S] cluster.

The protein belongs to the IspG family. The cofactor is [4Fe-4S] cluster.

The enzyme catalyses (2E)-4-hydroxy-3-methylbut-2-enyl diphosphate + oxidized [flavodoxin] + H2O + 2 H(+) = 2-C-methyl-D-erythritol 2,4-cyclic diphosphate + reduced [flavodoxin]. The protein operates within isoprenoid biosynthesis; isopentenyl diphosphate biosynthesis via DXP pathway; isopentenyl diphosphate from 1-deoxy-D-xylulose 5-phosphate: step 5/6. In terms of biological role, converts 2C-methyl-D-erythritol 2,4-cyclodiphosphate (ME-2,4cPP) into 1-hydroxy-2-methyl-2-(E)-butenyl 4-diphosphate. This is 4-hydroxy-3-methylbut-2-en-1-yl diphosphate synthase (flavodoxin) from Rhizobium etli (strain ATCC 51251 / DSM 11541 / JCM 21823 / NBRC 15573 / CFN 42).